The following is a 126-amino-acid chain: DNA-directed RNA polymerase I subunit RPA12 (126 aa).

6 residues coordinate Zn(2+): cysteine 20, cysteine 23, cysteine 38, cysteine 41, cysteine 87, and cysteine 90. The C4-type zinc finger occupies 20–41 (CSDCGSVLPLPGAQDTVTCTRC). The TFIIS-type zinc-finger motif lies at 83 to 123 (VDRRCPRCGHEGMAYHTRQMRSADEGQTVFYTCTNCKFQEK). The short motif at 106–107 (DE) is the Hairpin element. Residues cysteine 115 and cysteine 118 each contribute to the Zn(2+) site.

The protein belongs to the archaeal RpoM/eukaryotic RPA12/RPB9/RPC11 RNA polymerase family. Component of the RNA polymerase I (Pol I) complex consisting of 13 subunits: a ten-subunit catalytic core composed of POLR1A/RPA1, POLR1B/RPA2, POLR1C/RPAC1, POLR1D/RPAC2, POLR1H/RPA12, POLR2E/RPABC1, POLR2F/RPABC2, POLR2H/RPABC3, POLR2K/RPABC4 and POLR2L/RPABC5; a mobile stalk subunit POLR1F/RPA43 protruding from the core and additional subunits homologous to general transcription factors POLR1E/RPA49 and POLR1G/RPA34. Part of Pol I pre-initiation complex (PIC), in which Pol I core assembles with RRN3 and promoter-bound UTBF and SL1/TIF-IB complex.

It localises to the nucleus. It is found in the nucleolus. In terms of biological role, core component of RNA polymerase I (Pol I), a DNA-dependent RNA polymerase which synthesizes ribosomal RNA precursors using the four ribonucleoside triphosphates as substrates. Can mediate Pol I proofreading of the nascent RNA transcript. Anchors into the Pol I active site to monitor transcription fidelity and cleave mis-incorporated 5'-ribonucleotides. The chain is DNA-directed RNA polymerase I subunit RPA12 from Macaca mulatta (Rhesus macaque).